We begin with the raw amino-acid sequence, 141 residues long: Large ribosomal subunit protein uL11 (141 aa).

The protein belongs to the universal ribosomal protein uL11 family. As to quaternary structure, part of the ribosomal stalk of the 50S ribosomal subunit. Interacts with L10 and the large rRNA to form the base of the stalk. L10 forms an elongated spine to which L12 dimers bind in a sequential fashion forming a multimeric L10(L12)X complex. Post-translationally, one or more lysine residues are methylated.

Functionally, forms part of the ribosomal stalk which helps the ribosome interact with GTP-bound translation factors. This chain is Large ribosomal subunit protein uL11, found in Lactococcus lactis subsp. lactis (strain IL1403) (Streptococcus lactis).